The sequence spans 949 residues: Lon protease homolog, mitochondrial (949 aa).

A mitochondrion-targeting transit peptide spans 1–65 (MAASTGYVRL…VLPGGVQWRG (65 aa)). Disordered regions lie at residues 68 to 94 (DSGNRGGSDETSEGGAEDGATASTGEG) and 213 to 240 (EGLEPEAEKQKSRRKLKRGKKEVEDELG). Positions 112-359 (LPLIAITRNP…KALSLLKKEF (248 aa)) constitute a Lon N-terminal domain. Residues 223–232 (KSRRKLKRGK) show a composition bias toward basic residues. 512-519 (GPPGVGKT) is an ATP binding site. The region spanning 748–938 (VTPPGVVMGL…RDIFPIAFPR (191 aa)) is the Lon proteolytic domain. Active-site residues include Ser844 and Lys887.

It belongs to the peptidase S16 family. As to quaternary structure, homohexamer. Organized in a ring with a central cavity. The ATP-binding and proteolytic domains (AP-domain) form a hexameric chamber, while the N-terminal domain is arranged as a trimer of dimers. DNA and RNA binding is stimulated by substrate and inhibited by ATP binding. Interacts with TWNK and mitochondrial DNA polymerase subunit POLG. Detected in liver &gt; heart &gt; kidney &gt; testis.

It localises to the mitochondrion matrix. It carries out the reaction Hydrolysis of proteins in presence of ATP.. Its function is as follows. ATP-dependent serine protease that mediates the selective degradation of misfolded, unassembled or oxidatively damaged polypeptides as well as certain short-lived regulatory proteins in the mitochondrial matrix. Endogenous substrates include mitochondrial steroidogenic acute regulatory (StAR) protein, DELE1, helicase Twinkle (TWNK) and the large ribosomal subunit protein MRPL32/bL32m. MRPL32/bL32m is protected from degradation by LONP1 when it is bound to a nucleic acid (RNA), but TWNK is not. May also have a chaperone function in the assembly of inner membrane protein complexes. Participates in the regulation of mitochondrial gene expression and in the maintenance of the integrity of the mitochondrial genome. Binds to mitochondrial promoters and RNA in a single-stranded, site-specific, and strand-specific manner. May regulate mitochondrial DNA replication and/or gene expression using site-specific, single-stranded DNA binding to target the degradation of regulatory proteins binding to adjacent sites in mitochondrial promoters. This Mus musculus (Mouse) protein is Lon protease homolog, mitochondrial (Lonp1).